The primary structure comprises 428 residues: D-inositol 3-phosphate glycosyltransferase (428 aa).

Residue His17 participates in 1D-myo-inositol 3-phosphate binding. UDP-N-acetyl-alpha-D-glucosamine is bound by residues 23 to 24 (QP) and Gly31. 1D-myo-inositol 3-phosphate-binding positions include 28–33 (DAGGMN), Arg86, Tyr119, Thr143, and Arg163. Residues Arg237 and Lys242 each contribute to the UDP-N-acetyl-alpha-D-glucosamine site. The Mg(2+) site is built by Tyr312, Arg313, and Ala315. Residues Glu325 and Glu333 each coordinate UDP-N-acetyl-alpha-D-glucosamine. A Mg(2+)-binding site is contributed by Thr339.

It belongs to the glycosyltransferase group 1 family. MshA subfamily. In terms of assembly, homodimer.

The enzyme catalyses 1D-myo-inositol 3-phosphate + UDP-N-acetyl-alpha-D-glucosamine = 1D-myo-inositol 2-acetamido-2-deoxy-alpha-D-glucopyranoside 3-phosphate + UDP + H(+). In terms of biological role, catalyzes the transfer of a N-acetyl-glucosamine moiety to 1D-myo-inositol 3-phosphate to produce 1D-myo-inositol 2-acetamido-2-deoxy-glucopyranoside 3-phosphate in the mycothiol biosynthesis pathway. This is D-inositol 3-phosphate glycosyltransferase from Thermobispora bispora (strain ATCC 19993 / DSM 43833 / CBS 139.67 / JCM 10125 / KCTC 9307 / NBRC 14880 / R51).